The sequence spans 538 residues: Non-specific phospholipase C4 (538 aa).

The interval 91-112 is disordered; sequence KPWDSGKPDPNPGHPNMSGFAQ.

The protein belongs to the bacterial phospholipase C family. Expressed in root tips, cotyledons, on leaf margins, stems, young anthers and funiculus.

The protein localises to the cell membrane. The catalysed reaction is a 1,2-diacyl-sn-glycero-3-phosphocholine + H2O = phosphocholine + a 1,2-diacyl-sn-glycerol + H(+). Functionally, non-specific phospholipase C (PLC) which assumes major PLC activity during inorganic phosphate starvation. Substrate preference is phosphatidylcholine (PC), but can also hydrolyze phosphatidylethanolamine (PE) with lower efficiency. Has no activity toward phosphatidic acid (PA). Plays an important role in the supply of both inorganic phosphate and diacylglycerol from membrane-localized phospholipids during phosphate deprivation. May be required for lipid-derived signaling molecules that positively modulate abscisic acid (ABA) response and promote plant tolerance to drought and salt stresses. May be involved in brassinolide-mediated signaling in root development. In Arabidopsis thaliana (Mouse-ear cress), this protein is Non-specific phospholipase C4 (NPC4).